A 1377-amino-acid chain; its full sequence is DNA-directed RNA polymerase subunit beta' (1377 aa).

Zn(2+) contacts are provided by Cys70, Cys72, Cys85, and Cys88. Mg(2+)-binding residues include Asp460, Asp462, and Asp464. 4 residues coordinate Zn(2+): Cys808, Cys882, Cys889, and Cys892.

It belongs to the RNA polymerase beta' chain family. As to quaternary structure, the RNAP catalytic core consists of 2 alpha, 1 beta, 1 beta' and 1 omega subunit. When a sigma factor is associated with the core the holoenzyme is formed, which can initiate transcription. Requires Mg(2+) as cofactor. Zn(2+) serves as cofactor.

The enzyme catalyses RNA(n) + a ribonucleoside 5'-triphosphate = RNA(n+1) + diphosphate. In terms of biological role, DNA-dependent RNA polymerase catalyzes the transcription of DNA into RNA using the four ribonucleoside triphosphates as substrates. The chain is DNA-directed RNA polymerase subunit beta' from Geotalea uraniireducens (strain Rf4) (Geobacter uraniireducens).